A 549-amino-acid chain; its full sequence is MKNINPTQTAAWQALQKHFDEMKDVTIADLFAKDGDRFSKFSATFDDQMLVDYSKNRITEETLAKLQDLAKECDLAGAIKSMFSGEKINRTENRAVLHVALRNRSNTPILVDGKDVMPEVNAVLEKMKTFSEAIISGEWKGYTGKAITDVVNIGIGGSDLGPYMVTEALRPYKNHLNMHFVSNVDGTHIAEVLKKVNPETTLFLVASKTFTTQETMTNAHSARDWFLKAAGDEKHVAKHFAALSTNAKAVGEFGIDTANMFEFWDWVGGRYSLWSAIGLSIVLSIGFDNFVELLSGAHAMDKHFSTTPAEKNLPVLLALIGIWYNNFFGAETEAILPYDQYMHRFAAYFQQGNMESNGKYVDRNGKVVDYQTGPIIWGEPGTNGQHAFYQLIHQGTKMVPCDFIAPAITHNPLSDHHQKLLSNFFAQTEALAFGKSREVVEQEYRDQGKDPATLDYVVPFKVFEGNRPTNSILLREITPFSLGALIALYEHKIFTQGVILNIFTFDQWGVELGKQLANRILPELKDDKEISSHDSSTNGLINRYKAWRG.

An N6-acetyllysine mark is found at Lys80, Lys228, and Lys234. Glu355 (proton donor) is an active-site residue. Catalysis depends on residues His386 and Lys514.

Belongs to the GPI family.

Its subcellular location is the cytoplasm. It carries out the reaction alpha-D-glucose 6-phosphate = beta-D-fructose 6-phosphate. Its pathway is carbohydrate biosynthesis; gluconeogenesis. It functions in the pathway carbohydrate degradation; glycolysis; D-glyceraldehyde 3-phosphate and glycerone phosphate from D-glucose: step 2/4. Catalyzes the reversible isomerization of glucose-6-phosphate to fructose-6-phosphate. This chain is Glucose-6-phosphate isomerase, found in Escherichia coli O127:H6 (strain E2348/69 / EPEC).